The following is a 1365-amino-acid chain: DNA-directed RNA polymerase subunit beta'' (1365 aa).

4 residues coordinate Zn(2+): Cys-224, Cys-295, Cys-302, and Cys-305.

Belongs to the RNA polymerase beta' chain family. RpoC2 subfamily. In plastids the minimal PEP RNA polymerase catalytic core is composed of four subunits: alpha, beta, beta', and beta''. When a (nuclear-encoded) sigma factor is associated with the core the holoenzyme is formed, which can initiate transcription. It depends on Zn(2+) as a cofactor.

It is found in the plastid. Its subcellular location is the chloroplast. It catalyses the reaction RNA(n) + a ribonucleoside 5'-triphosphate = RNA(n+1) + diphosphate. Functionally, DNA-dependent RNA polymerase catalyzes the transcription of DNA into RNA using the four ribonucleoside triphosphates as substrates. This Fagopyrum esculentum subsp. ancestrale (Wild buckwheat) protein is DNA-directed RNA polymerase subunit beta''.